Consider the following 221-residue polypeptide: Ethylene-inducing xylanase 4 (221 aa).

A signal peptide spans 1-19 (MVSFSTLLTACTAITGALG). A GH11 domain is found at 28 to 218 (NVTPNAQGTH…SAGRASVVVE (191 aa)). N-linked (GlcNAc...) asparagine glycosylation occurs at N96. E114 serves as the catalytic Nucleophile. Catalysis depends on E205, which acts as the Proton donor.

Belongs to the glycosyl hydrolase 11 (cellulase G) family.

The enzyme catalyses Endohydrolysis of (1-&gt;4)-beta-D-xylosidic linkages in xylans.. It participates in glycan degradation; xylan degradation. Endo-1,4-beta-xylanase involved in the hydrolysis of xylan, a major structural heterogeneous polysaccharide found in plant biomass representing the second most abundant polysaccharide in the biosphere, after cellulose. May act as an elicitor of plant defense responses in certain plants but does not exhibit any cell death when transiently expressed in N.benthamiana. The polypeptide is Ethylene-inducing xylanase 4 (Verticillium dahliae (strain VdLs.17 / ATCC MYA-4575 / FGSC 10137) (Verticillium wilt)).